The chain runs to 65 residues: Defensin Cg-Defm (65 aa).

The signal sequence occupies residues 1 to 22 (MKVFVLLTLAVLLMVSADMAFA). Residues Phe24, Gly25, and Cys26 each coordinate beta-D-GlcNAc-(1-&gt;4)-Mur2Ac(oyl-L-Ala-gamma-D-Glu-L-Lys-D-Ala-D-Ala)-di-trans,octa-cis-undecaprenyl diphosphate. Disulfide bonds link Cys26–Cys47, Cys33–Cys56, Cys37–Cys58, and Cys42–Cys61. Residues 27–30 (PGNQ) are binds to membrane interface. His36 provides a ligand contact to beta-D-GlcNAc-(1-&gt;4)-Mur2Ac(oyl-L-Ala-gamma-D-Glu-L-Lys-D-Ala-D-Ala)-di-trans,octa-cis-undecaprenyl diphosphate. The interval 48–54 (DAATLWL) is binds to membrane interface. Cys56 is a beta-D-GlcNAc-(1-&gt;4)-Mur2Ac(oyl-L-Ala-gamma-D-Glu-L-Lys-D-Ala-D-Ala)-di-trans,octa-cis-undecaprenyl diphosphate binding site.

It belongs to the invertebrate defensin family. As to expression, expressed in the mantle. Low or no expression in most of the organs analyzed, including hemocytes, heart, digestive gland, and gills.

The protein resides in the secreted. The protein localises to the target cell membrane. Its function is as follows. Antibacterial peptide mostly active against Gram-positive bacteria (M.lysodeikticus, S.aureus, and the marine bacteria, B.stationis, and M.maritypicum). It acts by selectively inhibiting peptidoglycan biosynthesis through complex formation with the cell wall precursor lipid II (1:1 molar ratio) thus inhibiting cell wall synthesis. It does not disrupt cell membranes. Is noticeably more potent than Cg-Defh1. It shows no or limited activities against Gram-negative bacteria and filamentous fungi. This chain is Defensin Cg-Defm, found in Magallana gigas (Pacific oyster).